Reading from the N-terminus, the 911-residue chain is Gag-Pro polyprotein (911 aa).

Residues 101–161 (AAVAQTEEIL…TKKPKRFPVL (61 aa)) constitute a propeptide that is removed on maturation. Polar residues-rich tracts occupy residues 113–125 (NSQTDLTKTSQNP) and 140–152 (KSSSLQDKGLSST). The segment at 113–178 (NSQTDLTKTS…DPEDPNPSEV (66 aa)) is disordered. A PPXY motif motif is present at residues 202-205 (PPPY). Residues 210–213 (PSAP) carry the PTAP/PSAP motif motif. The stretch at 216 to 257 (MAVVNPKEELKEKIAQLEEQIKLEELHQALISKLQKLKTGNE) forms a coiled coil. The tract at residues 260–279 (THPDTAGGLSRTPHWPGQHI) is disordered. 2 consecutive CCHC-type zinc fingers follow at residues 547-564 (GCCFKCGKKGHFAKNCHE) and 576-593 (GLCPRCKRGKHWANECKS). The disordered stretch occupies residues 592–626 (KSKTDNQGNPIPPHQGNRVEGPAPGPETSLWGSQL). The 77-residue stretch at 780–856 (FTGLIDTGAD…LPVNLWGRDL (77 aa)) folds into the Peptidase A2 domain. Aspartate 785 functions as the Protease; shared with dimeric partner in the catalytic mechanism. In terms of domain architecture, G-patch spans 867 to 911 (PNDIVTAQMLAQGYSPGKGLGKKENGILHPIPNQGQSNKKGFGNF).

Homodimer. In terms of assembly, interacts with the reverse transcriptase/ribonuclease H. As to quaternary structure, homotrimer. Post-translationally, released by autocatalytic processing. The protease can undergo further autoprocessing to yield 2 shorter but enzymatically active forms of 12 kDa and 13 kDa without the GDP domain. the 12 kDa form is monomeric. Myristoylated. Myristoylation of the matrix (MA) domain mediates the transport and binding of Gag polyproteins to the host plasma membrane and is required for the assembly of viral particles. In terms of processing, specific enzymatic cleavages in vivo yield mature proteins.

The protein localises to the virion. The catalysed reaction is dUTP + H2O = dUMP + diphosphate + H(+). Its function is as follows. Matrix protein. Nucleocapsid protein p14: Nucleocapsid protein. In terms of biological role, capsid protein. Functionally, the aspartyl protease mediates proteolytic cleavages of Gag and Gag-Pol polyproteins during or shortly after the release of the virion from the plasma membrane. Cleavages take place as an ordered, step-wise cascade to yield mature proteins. This process is called maturation. Displays maximal activity during the budding process just prior to particle release from the cell. Its function is as follows. Enhances the activity of the reverse transcriptase. May be part of the mature RT. The protein is Gag-Pro polyprotein (gag-pro) of Mason-Pfizer monkey virus (MPMV).